A 434-amino-acid polypeptide reads, in one-letter code: Glutamate-1-semialdehyde 2,1-aminomutase (434 aa).

Residue K266 is modified to N6-(pyridoxal phosphate)lysine.

It belongs to the class-III pyridoxal-phosphate-dependent aminotransferase family. HemL subfamily. Homodimer. The cofactor is pyridoxal 5'-phosphate.

It is found in the cytoplasm. The catalysed reaction is (S)-4-amino-5-oxopentanoate = 5-aminolevulinate. Its pathway is porphyrin-containing compound metabolism; protoporphyrin-IX biosynthesis; 5-aminolevulinate from L-glutamyl-tRNA(Glu): step 2/2. The sequence is that of Glutamate-1-semialdehyde 2,1-aminomutase from Psychrobacter sp. (strain PRwf-1).